The primary structure comprises 458 residues: ATP synthase subunit beta (458 aa).

148–155 (GGAGVGKT) serves as a coordination point for ATP.

The protein belongs to the ATPase alpha/beta chains family. As to quaternary structure, F-type ATPases have 2 components, CF(1) - the catalytic core - and CF(0) - the membrane proton channel. CF(1) has five subunits: alpha(3), beta(3), gamma(1), delta(1), epsilon(1). CF(0) has three main subunits: a(1), b(2) and c(9-12). The alpha and beta chains form an alternating ring which encloses part of the gamma chain. CF(1) is attached to CF(0) by a central stalk formed by the gamma and epsilon chains, while a peripheral stalk is formed by the delta and b chains.

It localises to the cell inner membrane. The enzyme catalyses ATP + H2O + 4 H(+)(in) = ADP + phosphate + 5 H(+)(out). In terms of biological role, produces ATP from ADP in the presence of a proton gradient across the membrane. The catalytic sites are hosted primarily by the beta subunits. In Francisella tularensis subsp. holarctica (strain FTNF002-00 / FTA), this protein is ATP synthase subunit beta.